Consider the following 213-residue polypeptide: Bacteriochlorophyll synthase 23 kDa chain (213 aa).

The protein operates within porphyrin-containing compound metabolism; bacteriochlorophyll biosynthesis (light-independent). The protein is Bacteriochlorophyll synthase 23 kDa chain (bchJ) of Rhodobacter capsulatus (strain ATCC BAA-309 / NBRC 16581 / SB1003).